A 250-amino-acid chain; its full sequence is Probable chemoreceptor glutamine deamidase CheD (250 aa).

The protein belongs to the CheD family.

It carries out the reaction L-glutaminyl-[protein] + H2O = L-glutamyl-[protein] + NH4(+). Its function is as follows. Probably deamidates glutamine residues to glutamate on methyl-accepting chemotaxis receptors (MCPs), playing an important role in chemotaxis. The polypeptide is Probable chemoreceptor glutamine deamidase CheD (Paraburkholderia xenovorans (strain LB400)).